A 295-amino-acid polypeptide reads, in one-letter code: Enolase-phosphatase E1 (295 aa).

D20 and E22 together coordinate Mg(2+). Residues 153–154 and K187 each bind substrate; that span reads SS. D212 is a binding site for Mg(2+). Residues 260 to 295 are disordered; the sequence is ETKEENGGATNGKRKIEETNDDVAEEDKAQVYPNKK.

This sequence belongs to the HAD-like hydrolase superfamily. MasA/MtnC family. In terms of assembly, monomer. It depends on Mg(2+) as a cofactor.

The protein localises to the cytoplasm. It localises to the nucleus. It catalyses the reaction 5-methylsulfanyl-2,3-dioxopentyl phosphate + H2O = 1,2-dihydroxy-5-(methylsulfanyl)pent-1-en-3-one + phosphate. It participates in amino-acid biosynthesis; L-methionine biosynthesis via salvage pathway; L-methionine from S-methyl-5-thio-alpha-D-ribose 1-phosphate: step 3/6. Its pathway is amino-acid biosynthesis; L-methionine biosynthesis via salvage pathway; L-methionine from S-methyl-5-thio-alpha-D-ribose 1-phosphate: step 4/6. In terms of biological role, bifunctional enzyme that catalyzes the enolization of 2,3-diketo-5-methylthiopentyl-1-phosphate (DK-MTP-1-P) into the intermediate 2-hydroxy-3-keto-5-methylthiopentenyl-1-phosphate (HK-MTPenyl-1-P), which is then dephosphorylated to form the acireductone 1,2-dihydroxy-3-keto-5-methylthiopentene (DHK-MTPene). This chain is Enolase-phosphatase E1, found in Anopheles gambiae (African malaria mosquito).